A 209-amino-acid polypeptide reads, in one-letter code: Uracil phosphoribosyltransferase (209 aa).

5-phospho-alpha-D-ribose 1-diphosphate is bound by residues R79, R104, and 131–139 (DPMLATGGS). Uracil contacts are provided by residues V194 and 199–201 (GDA). 5-phospho-alpha-D-ribose 1-diphosphate is bound at residue D200.

Belongs to the UPRTase family. It depends on Mg(2+) as a cofactor.

It carries out the reaction UMP + diphosphate = 5-phospho-alpha-D-ribose 1-diphosphate + uracil. It participates in pyrimidine metabolism; UMP biosynthesis via salvage pathway; UMP from uracil: step 1/1. Allosterically activated by GTP. Functionally, catalyzes the conversion of uracil and 5-phospho-alpha-D-ribose 1-diphosphate (PRPP) to UMP and diphosphate. The chain is Uracil phosphoribosyltransferase from Clostridium botulinum (strain ATCC 19397 / Type A).